We begin with the raw amino-acid sequence, 80 residues long: Beta-toxin KAaH2 (80 aa).

Residues 1 to 22 (MMKLMLFSIIVILFSLIGSIHG) form the signal peptide. The region spanning 25–80 (VPGNYPLDSSDDTYLCAPLGENPSCIQICRKHGVKYGYCYAFQCWCEYLEDKNVKI) is the LCN-type CS-alpha/beta domain. Cystine bridges form between C40–C63, C49–C68, and C53–C70.

Belongs to the long (3 C-C) scorpion toxin superfamily. Sodium/Potassium channel inhibitor family. As to expression, expressed by the venom gland.

The protein localises to the secreted. In terms of biological role, weakly inhibits the vertebrate potassium channel Kv1.1/KCNA1. The sequence is that of Beta-toxin KAaH2 from Androctonus australis (Sahara scorpion).